The chain runs to 334 residues: Trans-1,2-dihydrobenzene-1,2-diol dehydrogenase (334 aa).

This sequence belongs to the Gfo/Idh/MocA family. In terms of assembly, homodimer.

The catalysed reaction is (1R,2R)-1,2-dihydrobenzene-1,2-diol + NADP(+) = catechol + NADPH + H(+). It carries out the reaction D-xylose + NADP(+) = D-xylono-1,5-lactone + NADPH + H(+). The polypeptide is Trans-1,2-dihydrobenzene-1,2-diol dehydrogenase (dhdh) (Danio rerio (Zebrafish)).